The following is a 456-amino-acid chain: tRNA-2-methylthio-N(6)-dimethylallyladenosine synthase (456 aa).

An MTTase N-terminal domain is found at 2 to 119; that stretch reads KKVFIKTYGC…LPDLIAARRR (118 aa). [4Fe-4S] cluster is bound by residues C11, C48, C82, C156, C160, and C163. Residues 142–375 form the Radical SAM core domain; sequence RVDGASAYVS…QATIEENVAR (234 aa). Residues 378 to 448 form the TRAM domain; that stretch reads QGMVGSVQRI…PHSLRGEVAE (71 aa).

This sequence belongs to the methylthiotransferase family. MiaB subfamily. As to quaternary structure, monomer. [4Fe-4S] cluster serves as cofactor.

It localises to the cytoplasm. The catalysed reaction is N(6)-dimethylallyladenosine(37) in tRNA + (sulfur carrier)-SH + AH2 + 2 S-adenosyl-L-methionine = 2-methylsulfanyl-N(6)-dimethylallyladenosine(37) in tRNA + (sulfur carrier)-H + 5'-deoxyadenosine + L-methionine + A + S-adenosyl-L-homocysteine + 2 H(+). Catalyzes the methylthiolation of N6-(dimethylallyl)adenosine (i(6)A), leading to the formation of 2-methylthio-N6-(dimethylallyl)adenosine (ms(2)i(6)A) at position 37 in tRNAs that read codons beginning with uridine. This Ralstonia pickettii (strain 12J) protein is tRNA-2-methylthio-N(6)-dimethylallyladenosine synthase.